A 273-amino-acid polypeptide reads, in one-letter code: MKKYLLGIGLILALIACKQNVSSLDEKNSVSVDLPGEMKVLVSKEKDKDGKYSLMATVDKLELKGTSDKSNGSGTLEGEKSDKSKAKLTISEDLSKTTFEIFKEDGKTLVSKKVNSKDKSSIEEKFNAKGELSEKTILRANGTRLEYTEIKSDGTGKAKEVLKDFALEGTLAADKTTLKVTEGTVVLSKHIPNSGEITVELNDSNSTQATKKTGKWDSNTSTLTISVNSKKTKNIVFTKEDTITVQKYDSAGTNLEGNAVEIKTLDELKNALK.

Positions 1–16 (MKKYLLGIGLILALIA) are cleaved as a signal peptide. Residue Cys17 is the site of N-palmitoyl cysteine attachment. Cys17 carries the S-diacylglycerol cysteine lipid modification.

Belongs to the OspA lipoprotein family.

The protein resides in the cell outer membrane. It is found in the cell surface. This is Outer surface protein A from Borreliella burgdorferi (Lyme disease spirochete).